Here is a 123-residue protein sequence, read N- to C-terminus: Small ribosomal subunit protein uS12 (123 aa).

The tract at residues 1 to 28 is disordered; sequence MPTIQQLIRNPREPKRTRTKTPALKACP. At D89 the chain carries 3-methylthioaspartic acid. Positions 104 to 123 are disordered; sequence TQPVKNRKQRRSHYGAKKPK. Residues 108–123 show a composition bias toward basic residues; it reads KNRKQRRSHYGAKKPK.

This sequence belongs to the universal ribosomal protein uS12 family. In terms of assembly, part of the 30S ribosomal subunit. Contacts proteins S8 and S17. May interact with IF1 in the 30S initiation complex.

Functionally, with S4 and S5 plays an important role in translational accuracy. Its function is as follows. Interacts with and stabilizes bases of the 16S rRNA that are involved in tRNA selection in the A site and with the mRNA backbone. Located at the interface of the 30S and 50S subunits, it traverses the body of the 30S subunit contacting proteins on the other side and probably holding the rRNA structure together. The combined cluster of proteins S8, S12 and S17 appears to hold together the shoulder and platform of the 30S subunit. This Hyphomonas neptunium (strain ATCC 15444) protein is Small ribosomal subunit protein uS12.